Reading from the N-terminus, the 279-residue chain is Pantothenate synthetase (279 aa).

Position 27–34 (methionine 27–histidine 34) interacts with ATP. Histidine 34 (proton donor) is an active-site residue. Residue glutamine 58 participates in (R)-pantoate binding. Glutamine 58 provides a ligand contact to beta-alanine. Glycine 144–aspartate 147 serves as a coordination point for ATP. Glutamine 150 serves as a coordination point for (R)-pantoate. ATP-binding positions include valine 173 and methionine 181–arginine 184.

This sequence belongs to the pantothenate synthetase family. Homodimer.

Its subcellular location is the cytoplasm. It carries out the reaction (R)-pantoate + beta-alanine + ATP = (R)-pantothenate + AMP + diphosphate + H(+). The protein operates within cofactor biosynthesis; (R)-pantothenate biosynthesis; (R)-pantothenate from (R)-pantoate and beta-alanine: step 1/1. In terms of biological role, catalyzes the condensation of pantoate with beta-alanine in an ATP-dependent reaction via a pantoyl-adenylate intermediate. This chain is Pantothenate synthetase, found in Citrifermentans bemidjiense (strain ATCC BAA-1014 / DSM 16622 / JCM 12645 / Bem) (Geobacter bemidjiensis).